An 80-amino-acid polypeptide reads, in one-letter code: D-alanyl carrier protein (80 aa).

The Carrier domain maps to 1 to 77; sequence MDIQKQIVDI…KLVEQVKKLQ (77 aa). O-(pantetheine 4'-phosphoryl)serine is present on Ser-35.

Belongs to the DltC family. Post-translationally, 4'-phosphopantetheine is transferred from CoA to a specific serine of apo-DCP.

The protein resides in the cytoplasm. Its pathway is cell wall biogenesis; lipoteichoic acid biosynthesis. In terms of biological role, carrier protein involved in the D-alanylation of lipoteichoic acid (LTA). The loading of thioester-linked D-alanine onto DltC is catalyzed by D-alanine--D-alanyl carrier protein ligase DltA. The DltC-carried D-alanyl group is further transferred to cell membrane phosphatidylglycerol (PG) by forming an ester bond, probably catalyzed by DltD. D-alanylation of LTA plays an important role in modulating the properties of the cell wall in Gram-positive bacteria, influencing the net charge of the cell wall. The polypeptide is D-alanyl carrier protein (Lactobacillus delbrueckii subsp. bulgaricus (strain ATCC 11842 / DSM 20081 / BCRC 10696 / JCM 1002 / NBRC 13953 / NCIMB 11778 / NCTC 12712 / WDCM 00102 / Lb 14)).